The primary structure comprises 78 residues: Acyl carrier protein (78 aa).

The region spanning 2-77 (DDLFKKIQQL…DAYEFIKSQQ (76 aa)) is the Carrier domain. Serine 37 carries the post-translational modification O-(pantetheine 4'-phosphoryl)serine.

The protein belongs to the acyl carrier protein (ACP) family. Post-translationally, 4'-phosphopantetheine is transferred from CoA to a specific serine of apo-ACP by AcpS. This modification is essential for activity because fatty acids are bound in thioester linkage to the sulfhydryl of the prosthetic group.

The protein resides in the cytoplasm. It functions in the pathway lipid metabolism; fatty acid biosynthesis. Functionally, carrier of the growing fatty acid chain in fatty acid biosynthesis. In Treponema denticola (strain ATCC 35405 / DSM 14222 / CIP 103919 / JCM 8153 / KCTC 15104), this protein is Acyl carrier protein.